The chain runs to 209 residues: Ribosomal RNA large subunit methyltransferase E (209 aa).

Glycine 63, tryptophan 65, aspartate 83, aspartate 99, and aspartate 124 together coordinate S-adenosyl-L-methionine. Residue lysine 164 is the Proton acceptor of the active site.

Belongs to the class I-like SAM-binding methyltransferase superfamily. RNA methyltransferase RlmE family.

Its subcellular location is the cytoplasm. It catalyses the reaction uridine(2552) in 23S rRNA + S-adenosyl-L-methionine = 2'-O-methyluridine(2552) in 23S rRNA + S-adenosyl-L-homocysteine + H(+). In terms of biological role, specifically methylates the uridine in position 2552 of 23S rRNA at the 2'-O position of the ribose in the fully assembled 50S ribosomal subunit. The protein is Ribosomal RNA large subunit methyltransferase E of Shewanella halifaxensis (strain HAW-EB4).